We begin with the raw amino-acid sequence, 427 residues long: MWKHVKQVDPEIYEVLVNELKRQEYGLELIASENFASLAVIETMGSMLTNKYAEGYPKKRYYGGCEWVDRAEERAIERAKRLFGAKFANVQPHSGSQANMAVYLALAQPGDTIMGMSLSHGGHLTHGAPVNFSGKIFKVVPYGVNLETETIDYDEVRRLALEHKPKIIVAGGSAYARIIDFKRFREIADEVGAYLMVDMAHFAGLVAAGIHPNPLEYAHVVTSTTHKTLRGPRGGLILTNDPEIAKAVDKTIFPGIQGGPLMHVIAAKAVCFKEAMTEEFKEYQKQVVKNAKKMAEEFQKRGYRIVSGGTDTHLFLVDLTPKDITGKAAEKALESCGITVNKNTIPNEKRSPFVASGIRIGTPAVTTRGMKEEEMEEIAEMIDLVLSNVIDENGTVKPEVREEVSKKVRELCERFPLYRDKIEGVEI.

(6S)-5,6,7,8-tetrahydrofolate contacts are provided by residues L118 and 122–124; that span reads GHL. An N6-(pyridoxal phosphate)lysine modification is found at K227. (6S)-5,6,7,8-tetrahydrofolate is bound by residues E243 and 351 to 353; that span reads SPF.

Belongs to the SHMT family. In terms of assembly, homodimer. It depends on pyridoxal 5'-phosphate as a cofactor.

The protein localises to the cytoplasm. The enzyme catalyses (6R)-5,10-methylene-5,6,7,8-tetrahydrofolate + glycine + H2O = (6S)-5,6,7,8-tetrahydrofolate + L-serine. Its pathway is one-carbon metabolism; tetrahydrofolate interconversion. It participates in amino-acid biosynthesis; glycine biosynthesis; glycine from L-serine: step 1/1. In terms of biological role, catalyzes the reversible interconversion of serine and glycine with tetrahydrofolate (THF) serving as the one-carbon carrier. This reaction serves as the major source of one-carbon groups required for the biosynthesis of purines, thymidylate, methionine, and other important biomolecules. Also exhibits THF-independent aldolase activity toward beta-hydroxyamino acids, producing glycine and aldehydes, via a retro-aldol mechanism. The polypeptide is Serine hydroxymethyltransferase (Thermotoga maritima (strain ATCC 43589 / DSM 3109 / JCM 10099 / NBRC 100826 / MSB8)).